Consider the following 219-residue polypeptide: UPF0502 protein Swoo_2055 (219 aa).

The interval 167–195 (QVKGESVPISEHSRSQREAPSKRQDEMDE) is disordered. The span at 177–191 (EHSRSQREAPSKRQD) shows a compositional bias: basic and acidic residues.

This sequence belongs to the UPF0502 family.

The protein is UPF0502 protein Swoo_2055 of Shewanella woodyi (strain ATCC 51908 / MS32).